Reading from the N-terminus, the 274-residue chain is 2-dehydro-3-deoxyphosphooctonate aldolase (274 aa).

This sequence belongs to the KdsA family.

It is found in the cytoplasm. The enzyme catalyses D-arabinose 5-phosphate + phosphoenolpyruvate + H2O = 3-deoxy-alpha-D-manno-2-octulosonate-8-phosphate + phosphate. The protein operates within carbohydrate biosynthesis; 3-deoxy-D-manno-octulosonate biosynthesis; 3-deoxy-D-manno-octulosonate from D-ribulose 5-phosphate: step 2/3. Its pathway is bacterial outer membrane biogenesis; lipopolysaccharide biosynthesis. The protein is 2-dehydro-3-deoxyphosphooctonate aldolase of Rickettsia canadensis (strain McKiel).